We begin with the raw amino-acid sequence, 380 residues long: tRNA-specific 2-thiouridylase MnmA (380 aa).

Residues 12–19 and Met38 contribute to the ATP site; that span reads GLSGGVDS. Positions 108–110 are interaction with target base in tRNA; that stretch reads NPD. The active-site Nucleophile is the Cys113. Cys113 and Cys210 form a disulfide bridge. ATP is bound at residue Gly138. Residues 160 to 162 are interaction with tRNA; it reads KDQ. The active-site Cysteine persulfide intermediate is Cys210.

Belongs to the MnmA/TRMU family.

It localises to the cytoplasm. It catalyses the reaction S-sulfanyl-L-cysteinyl-[protein] + uridine(34) in tRNA + AH2 + ATP = 2-thiouridine(34) in tRNA + L-cysteinyl-[protein] + A + AMP + diphosphate + H(+). Functionally, catalyzes the 2-thiolation of uridine at the wobble position (U34) of tRNA, leading to the formation of s(2)U34. The chain is tRNA-specific 2-thiouridylase MnmA from Ureaplasma urealyticum serovar 10 (strain ATCC 33699 / Western).